A 408-amino-acid chain; its full sequence is Histidine--tRNA ligase (408 aa).

This sequence belongs to the class-II aminoacyl-tRNA synthetase family. In terms of assembly, homodimer.

It is found in the cytoplasm. It carries out the reaction tRNA(His) + L-histidine + ATP = L-histidyl-tRNA(His) + AMP + diphosphate + H(+). This chain is Histidine--tRNA ligase, found in Campylobacter lari (strain RM2100 / D67 / ATCC BAA-1060).